The sequence spans 854 residues: DNA mismatch repair protein MutS (854 aa).

615-622 (GPNMGGKS) lines the ATP pocket.

The protein belongs to the DNA mismatch repair MutS family.

Its function is as follows. This protein is involved in the repair of mismatches in DNA. It is possible that it carries out the mismatch recognition step. This protein has a weak ATPase activity. In Proteus mirabilis (strain HI4320), this protein is DNA mismatch repair protein MutS.